We begin with the raw amino-acid sequence, 249 residues long: tRNA pseudouridine synthase A (249 aa).

The active-site Nucleophile is the D53. Y111 contacts substrate.

It belongs to the tRNA pseudouridine synthase TruA family. In terms of assembly, homodimer.

It carries out the reaction uridine(38/39/40) in tRNA = pseudouridine(38/39/40) in tRNA. Formation of pseudouridine at positions 38, 39 and 40 in the anticodon stem and loop of transfer RNAs. The chain is tRNA pseudouridine synthase A from Streptococcus sanguinis (strain SK36).